The primary structure comprises 542 residues: Protein MPA43 (542 aa).

The protein is Protein MPA43 (MPA43) of Saccharomyces cerevisiae (strain ATCC 204508 / S288c) (Baker's yeast).